The chain runs to 1008 residues: Collagen alpha-1(I) chain (1008 aa).

The segment at 1–1008 (GGISVPGPMG…PGPPGPPGPP (1008 aa)) is disordered. 11 positions are modified to 4-hydroxyproline: Pro-18, Pro-21, Pro-23, Pro-32, Pro-35, Pro-38, Pro-52, Pro-67, Pro-73, Pro-82, and Pro-88. Positions 55–69 (NGDDGEAGKPGRPGE) are enriched in basic and acidic residues. Lys-91 is modified (5-hydroxylysine; alternate). The O-linked (Gal...) hydroxylysine; alternate glycan is linked to Lys-91. Ser-97 bears the Phosphoserine mark. Low complexity predominate over residues 105–121 (DAGPAGPKGEPGSPGEN). Pro-115, Pro-118, Pro-124, Pro-133, Pro-139, Pro-160, Pro-169, Pro-172, Pro-199, Pro-202, Pro-214, Pro-220, Pro-229, Pro-235, and Pro-238 each carry 4-hydroxyproline. Residues 139–157 (PGASGPAGARGNDGAAGAA) show a composition bias toward low complexity. The span at 159–171 (PPGPTGPAGPPGF) shows a compositional bias: pro residues. Positions 205 to 235 (AGAAGPAGNPGADGQPGAKGANGAPGIAGAP) are enriched in low complexity. Over residues 236–255 (GFPGRGPSGPQGPSGPGPKG) the composition is skewed to gly residues. Lys-254 is subject to 5-hydroxylysine. Pro-260, Pro-263, Pro-275, Pro-284, Pro-299, Pro-305, Pro-314, and Pro-320 each carry 4-hydroxyproline. The span at 309-318 (GERGGPGSRG) shows a compositional bias: gly residues. Lys-329 bears the 5-hydroxylysine mark. 4-hydroxyproline occurs at positions 338, 347, 353, 359, 368, 371, 380, 389, 395, 407, 416, 425, 428, 446, 463, 469, 475, 481, 487, 493, 505, 514, 523, 535, 538, 544, 550, and 559. A compositionally biased stretch (low complexity) spans 362–388 (KGLTGSPGSPGPDGKTGPPGPAGQDGR). Residues 397 to 416 (ARGQAGVMGFPGPKGAAGEP) show a composition bias toward low complexity. Residues 475 to 484 (PGEAGKPGEQ) show a composition bias toward low complexity. The span at 519–547 (PRGAPGNDGAKGDAGAPGAPGSQGAPGLQ) shows a compositional bias: low complexity. The residue at position 571 (Lys-571) is a 5-hydroxylysine. 3 positions are modified to 4-hydroxyproline: Pro-577, Pro-592, and Pro-598. Positions 604-618 (SGPSGPAGPTGARGA) are enriched in low complexity. Ser-607 is subject to Phosphoserine. A 4-hydroxyproline mark is found at Pro-619, Pro-625, Pro-628, Pro-637, Pro-643, Pro-661, Pro-670, and Pro-679. The span at 631–658 (AGFAGPPGADGQPGAKGEPGDAGAKGDA) shows a compositional bias: low complexity. Residues 660 to 672 (PPGPAGPTGPPGP) show a composition bias toward pro residues. At Lys-682 the chain carries 5-hydroxylysine. Low complexity predominate over residues 687–703 (SAGPPGATGFPGAAGRV). Residues Pro-691 and Pro-697 each carry the 4-hydroxyproline modification. Pro-705 bears the 3-hydroxyproline mark. 4-hydroxyproline is present on residues Pro-706, Pro-717, Pro-738, Pro-747, Pro-755, Pro-764, Pro-781, Pro-790, Pro-793, Pro-799, Pro-814, Pro-820, Pro-826, Pro-835, and Pro-841. The segment covering 731–740 (ETGPAGRPGE) has biased composition (low complexity). The span at 752–764 (KGSPGADGPAGAP) shows a compositional bias: low complexity. Pro residues predominate over residues 813-823 (PPGPVGPPGLA). A compositionally biased stretch (low complexity) spans 825–840 (PPGESGREGSPGAEGS). A 5-hydroxylysine modification is found at Lys-850. A compositionally biased stretch (pro residues) spans 858-873 (PGPPGAPGAPGAPGPV). Residues Pro-861, Pro-864, and Pro-867 each carry the 4-hydroxyproline modification. Residues 894–908 (AGPAGARGPAGPQGP) show a composition bias toward low complexity. Basic and acidic residues predominate over residues 909–923 (RGDKGETGEQGDRGI). Lys-912 carries the 5-hydroxylysine modification. Lys-924 bears the 5-hydroxylysine; alternate mark. Lys-924 is a glycosylation site (O-linked (Gal...) hydroxylysine; alternate). 4-hydroxyproline occurs at positions 939, 942, 960, and 975. Positions 942–975 (PGEQGPSGASGPAGPRGPPGSAGSPGKDGLNGLP) are enriched in low complexity. Position 980 is a 3-hydroxyproline (Pro-980). Pro-981 carries the 4-hydroxyproline modification. Over residues 993 to 1008 (VGPPGPPGPPGPPGPP) the composition is skewed to pro residues. At Pro-995 the chain carries 3-hydroxyproline. At Pro-996 the chain carries 4-hydroxyproline. Position 998 is a 3-hydroxyproline (Pro-998). Pro-999 is modified (4-hydroxyproline). 3-hydroxyproline is present on Pro-1001. Residues Pro-1002, Pro-1005, and Pro-1008 each carry the 4-hydroxyproline modification.

Belongs to the fibrillar collagen family. Trimers of one alpha 2(I) and two alpha 1(I) chains. In terms of processing, contains mostly 4-hydroxyproline. Proline residues at the third position of the tripeptide repeating unit (G-X-Y) are hydroxylated in some or all of the chains. Contains 3-hydroxyproline at a few sites. This modification occurs on the first proline residue in the sequence motif Gly-Pro-Hyp, where Hyp is 4-hydroxyproline. Post-translationally, lysine residues at the third position of the tripeptide repeating unit (G-X-Y) are 5-hydroxylated in some or all of the chains. In terms of processing, O-glycosylated on hydroxylated lysine residues. The O-linked glycan consists of a Glc-Gal disaccharide. Expressed in bones.

It localises to the secreted. Its subcellular location is the extracellular space. The protein localises to the extracellular matrix. Type I collagen is a member of group I collagen (fibrillar forming collagen). The protein is Collagen alpha-1(I) chain of Paramylodon harlani (Harlan's ground sloth).